We begin with the raw amino-acid sequence, 177 residues long: KxDL motif-containing protein 1 (177 aa).

N-acetylmethionine is present on Met-1. Residues 100–177 (SHIPEGSFLE…TDDEEETHEE (78 aa)) are disordered. Polar residues predominate over residues 125-145 (ATSEQSTGSCDTSPDTVSPSL).

This sequence belongs to the KXD1 family. Component of the BLOC-one-related complex (BORC) which is composed of BLOC1S1, BLOC1S2, BORCS5, BORCS6, BORCS7, BORCS8, KXD1 and SNAPIN. Associates with the BLOC-1 complex. Interacts with BLOC1S1. Interacts with DTNBP1/BLOC1S7 (via coiled-coil domain). Widely expressed.

Its subcellular location is the lysosome membrane. Functionally, as part of the BORC complex may play a role in lysosomes movement and localization at the cell periphery. Associated with the cytosolic face of lysosomes, the BORC complex may recruit ARL8B and couple lysosomes to microtubule plus-end-directed kinesin motor. May also be involved in the biogenesis of lysosome-related organelles such as melanosomes. This Mus musculus (Mouse) protein is KxDL motif-containing protein 1 (Kxd1).